Here is a 237-residue protein sequence, read N- to C-terminus: tRNA (guanine-N(7)-)-methyltransferase (237 aa).

Positions 56, 81, 108, and 131 each coordinate S-adenosyl-L-methionine. Residue aspartate 131 is part of the active site. Substrate-binding positions include lysine 135, aspartate 167, and 204-207; that span reads TKFE.

The protein belongs to the class I-like SAM-binding methyltransferase superfamily. TrmB family.

The catalysed reaction is guanosine(46) in tRNA + S-adenosyl-L-methionine = N(7)-methylguanosine(46) in tRNA + S-adenosyl-L-homocysteine. It participates in tRNA modification; N(7)-methylguanine-tRNA biosynthesis. Functionally, catalyzes the formation of N(7)-methylguanine at position 46 (m7G46) in tRNA. This is tRNA (guanine-N(7)-)-methyltransferase from Legionella pneumophila (strain Paris).